The following is a 662-amino-acid chain: DNA topoisomerase 4 subunit B (662 aa).

ATP-binding positions include Y20, N60, D87, 129 to 135 (GLHGVGI), and K359. The Toprim domain maps to 439–553 (TELFIVEGDS…EGHLYLAKPP (115 aa)). 3 residues coordinate Mg(2+): E445, D518, and D520.

This sequence belongs to the type II topoisomerase family. ParE type 1 subfamily. In terms of assembly, heterotetramer composed of ParC and ParE. Mg(2+) serves as cofactor. It depends on Mn(2+) as a cofactor. The cofactor is Ca(2+).

It carries out the reaction ATP-dependent breakage, passage and rejoining of double-stranded DNA.. Topoisomerase IV is essential for chromosome segregation. It relaxes supercoiled DNA. Performs the decatenation events required during the replication of a circular DNA molecule. In Rickettsia felis (strain ATCC VR-1525 / URRWXCal2) (Rickettsia azadi), this protein is DNA topoisomerase 4 subunit B.